The sequence spans 102 residues: Small ribosomal subunit protein uS10 (102 aa).

It belongs to the universal ribosomal protein uS10 family. Part of the 30S ribosomal subunit.

Its function is as follows. Involved in the binding of tRNA to the ribosomes. This is Small ribosomal subunit protein uS10 from Lactobacillus gasseri (strain ATCC 33323 / DSM 20243 / BCRC 14619 / CIP 102991 / JCM 1131 / KCTC 3163 / NCIMB 11718 / NCTC 13722 / AM63).